The chain runs to 350 residues: Tetraacyldisaccharide 4'-kinase (350 aa).

Position 49 to 56 (49 to 56 (TTGGTGKT)) interacts with ATP.

Belongs to the LpxK family.

The enzyme catalyses a lipid A disaccharide + ATP = a lipid IVA + ADP + H(+). Its pathway is glycolipid biosynthesis; lipid IV(A) biosynthesis; lipid IV(A) from (3R)-3-hydroxytetradecanoyl-[acyl-carrier-protein] and UDP-N-acetyl-alpha-D-glucosamine: step 6/6. Its function is as follows. Transfers the gamma-phosphate of ATP to the 4'-position of a tetraacyldisaccharide 1-phosphate intermediate (termed DS-1-P) to form tetraacyldisaccharide 1,4'-bis-phosphate (lipid IVA). In Chlorobaculum tepidum (strain ATCC 49652 / DSM 12025 / NBRC 103806 / TLS) (Chlorobium tepidum), this protein is Tetraacyldisaccharide 4'-kinase.